We begin with the raw amino-acid sequence, 137 residues long: Large ribosomal subunit protein uL16 (137 aa).

Residues 1–22 (MLQPKRTKFRKVQKGRNRGLAH) form a disordered region.

This sequence belongs to the universal ribosomal protein uL16 family. Part of the 50S ribosomal subunit.

Its function is as follows. Binds 23S rRNA and is also seen to make contacts with the A and possibly P site tRNAs. In Chromohalobacter salexigens (strain ATCC BAA-138 / DSM 3043 / CIP 106854 / NCIMB 13768 / 1H11), this protein is Large ribosomal subunit protein uL16.